The following is a 377-amino-acid chain: 8-amino-7-oxononanoate synthase (377 aa).

Residue R13 participates in substrate binding. Pyridoxal 5'-phosphate is bound at residue 100 to 101 (GY). H125 contacts substrate. S171, H199, and T228 together coordinate pyridoxal 5'-phosphate. Position 231 is an N6-(pyridoxal phosphate)lysine (K231). Residue T345 coordinates substrate.

Belongs to the class-II pyridoxal-phosphate-dependent aminotransferase family. BioF subfamily. In terms of assembly, homodimer. Pyridoxal 5'-phosphate serves as cofactor.

The catalysed reaction is 6-carboxyhexanoyl-[ACP] + L-alanine + H(+) = (8S)-8-amino-7-oxononanoate + holo-[ACP] + CO2. It functions in the pathway cofactor biosynthesis; biotin biosynthesis. Catalyzes the decarboxylative condensation of pimeloyl-[acyl-carrier protein] and L-alanine to produce 8-amino-7-oxononanoate (AON), [acyl-carrier protein], and carbon dioxide. In Nitrosococcus oceani (strain ATCC 19707 / BCRC 17464 / JCM 30415 / NCIMB 11848 / C-107), this protein is 8-amino-7-oxononanoate synthase.